Here is an 823-residue protein sequence, read N- to C-terminus: Leucine--tRNA ligase (823 aa).

The 'HIGH' region signature appears at 42 to 52 (PYPSGTLHMGH). Residues 575–579 (KMSKS) carry the 'KMSKS' region motif. Position 578 (K578) interacts with ATP.

Belongs to the class-I aminoacyl-tRNA synthetase family.

The protein localises to the cytoplasm. The enzyme catalyses tRNA(Leu) + L-leucine + ATP = L-leucyl-tRNA(Leu) + AMP + diphosphate. This Legionella pneumophila (strain Corby) protein is Leucine--tRNA ligase.